The sequence spans 124 residues: UPF0738 protein ABC2521 (124 aa).

Belongs to the UPF0738 family.

The polypeptide is UPF0738 protein ABC2521 (Shouchella clausii (strain KSM-K16) (Alkalihalobacillus clausii)).